We begin with the raw amino-acid sequence, 509 residues long: UDP-N-acetylmuramoyl-L-alanyl-D-glutamate--2,6-diaminopimelate ligase (509 aa).

UDP-N-acetyl-alpha-D-muramoyl-L-alanyl-D-glutamate is bound at residue Ser-32. 117–123 (GTNGKTT) contacts ATP. Residues 159–160 (TT), Ser-186, Gln-192, and Arg-194 contribute to the UDP-N-acetyl-alpha-D-muramoyl-L-alanyl-D-glutamate site. Lys-226 carries the N6-carboxylysine modification. Meso-2,6-diaminopimelate contacts are provided by residues Arg-401, 425–428 (DNPR), Gly-476, and Glu-480. The Meso-diaminopimelate recognition motif signature appears at 425-428 (DNPR).

This sequence belongs to the MurCDEF family. MurE subfamily. The cofactor is Mg(2+). Post-translationally, carboxylation is probably crucial for Mg(2+) binding and, consequently, for the gamma-phosphate positioning of ATP.

The protein localises to the cytoplasm. The enzyme catalyses UDP-N-acetyl-alpha-D-muramoyl-L-alanyl-D-glutamate + meso-2,6-diaminopimelate + ATP = UDP-N-acetyl-alpha-D-muramoyl-L-alanyl-gamma-D-glutamyl-meso-2,6-diaminopimelate + ADP + phosphate + H(+). It functions in the pathway cell wall biogenesis; peptidoglycan biosynthesis. Functionally, catalyzes the addition of meso-diaminopimelic acid to the nucleotide precursor UDP-N-acetylmuramoyl-L-alanyl-D-glutamate (UMAG) in the biosynthesis of bacterial cell-wall peptidoglycan. The sequence is that of UDP-N-acetylmuramoyl-L-alanyl-D-glutamate--2,6-diaminopimelate ligase from Prochlorococcus marinus (strain NATL1A).